We begin with the raw amino-acid sequence, 214 residues long: Holliday junction branch migration complex subunit RuvA (214 aa).

The domain I stretch occupies residues 1 to 67 (MVGWLKGLIV…ADNWQFFGFK (67 aa)). The tract at residues 68-146 (STQERDIFRE…AFAGMDPAPS (79 aa)) is domain II. Positions 147-154 (LAEGVSSE) are flexible linker. The domain III stretch occupies residues 155-214 (QMPESGADVEATLSMLGYDDLEVRRAIRAIAEGSDGPPPPGDDQDAWLRGCLQWLSRDSA).

It belongs to the RuvA family. In terms of assembly, homotetramer. Forms an RuvA(8)-RuvB(12)-Holliday junction (HJ) complex. HJ DNA is sandwiched between 2 RuvA tetramers; dsDNA enters through RuvA and exits via RuvB. An RuvB hexamer assembles on each DNA strand where it exits the tetramer. Each RuvB hexamer is contacted by two RuvA subunits (via domain III) on 2 adjacent RuvB subunits; this complex drives branch migration. In the full resolvosome a probable DNA-RuvA(4)-RuvB(12)-RuvC(2) complex forms which resolves the HJ.

The protein localises to the cytoplasm. In terms of biological role, the RuvA-RuvB-RuvC complex processes Holliday junction (HJ) DNA during genetic recombination and DNA repair, while the RuvA-RuvB complex plays an important role in the rescue of blocked DNA replication forks via replication fork reversal (RFR). RuvA specifically binds to HJ cruciform DNA, conferring on it an open structure. The RuvB hexamer acts as an ATP-dependent pump, pulling dsDNA into and through the RuvAB complex. HJ branch migration allows RuvC to scan DNA until it finds its consensus sequence, where it cleaves and resolves the cruciform DNA. This chain is Holliday junction branch migration complex subunit RuvA, found in Synechococcus sp. (strain CC9605).